A 171-amino-acid polypeptide reads, in one-letter code: Peptide deformylase 1 (171 aa).

Residues C99 and H141 each coordinate Fe cation. E142 is an active-site residue.

The protein belongs to the polypeptide deformylase family. Fe(2+) serves as cofactor.

It catalyses the reaction N-terminal N-formyl-L-methionyl-[peptide] + H2O = N-terminal L-methionyl-[peptide] + formate. Functionally, removes the formyl group from the N-terminal Met of newly synthesized proteins. Requires at least a dipeptide for an efficient rate of reaction. N-terminal L-methionine is a prerequisite for activity but the enzyme has broad specificity at other positions. This chain is Peptide deformylase 1, found in Xanthomonas axonopodis pv. citri (strain 306).